A 474-amino-acid polypeptide reads, in one-letter code: PRAME family member 1 (474 aa).

Residues 97-124 form an LRR 1; degenerate repeat; sequence RWKLQVLDLRDVDENFWARWPGAWALSC. One copy of the LRR 2; degenerate repeat lies at 179–203; it reads HLCCSKLVNYLTPIKYLRKSLKIIY. The stretch at 204–230 is one LRR 3; degenerate repeat; that stretch reads LNSIQELEIRNMSWPRLIRKLRCYLKE. An LRR 4; degenerate repeat occupies 231 to 265; sequence MKNLRKLVFSRCHHYTSDNELEGRLVAKFSSVFLR. 5 LRR repeats span residues 266-291, 292-323, 324-342, 348-375, and 376-400; these read LEHL…IRCL, QNPL…GYLK, HLNL…PLGA, AASL…GLSR, and CSQL…LLRH.

Belongs to the PRAME family.

This Homo sapiens (Human) protein is PRAME family member 1.